Here is a 138-residue protein sequence, read N- to C-terminus: rRNA methyltransferase 1, mitochondrial (138 aa).

Residues 1–21 (MNNQPCSIVWRRFLTSKVKPA) constitute a mitochondrion transit peptide. Residues 92 to 113 (KQDILSSKRQQEEHKSKYSRKS) are disordered.

It belongs to the class IV-like SAM-binding methyltransferase superfamily. RNA methyltransferase TrmH family.

It localises to the mitochondrion. The enzyme catalyses a guanosine in 21S rRNA + S-adenosyl-L-methionine = a 2'-O-methylguanosine in 21S rRNA + S-adenosyl-L-homocysteine + H(+). Functionally, S-adenosyl-L-methionine-dependent 2'-O-ribose methyltransferase that catalyzes the formation of the 2'-O-methylguanosine corresponding to position 2270 in S.cerevisiae 21S mitochondrial large ribosomal RNA, a universally conserved modification in the peptidyl transferase domain of the 21S rRNA. The polypeptide is rRNA methyltransferase 1, mitochondrial (Lachancea kluyveri (strain ATCC 58438 / CBS 3082 / BCRC 21498 / NBRC 1685 / JCM 7257 / NCYC 543 / NRRL Y-12651) (Yeast)).